The following is a 626-amino-acid chain: Anaphase-promoting complex subunit CDC23 (626 aa).

Position 59 is a phosphoserine; by CDC28 (Ser59). 9 TPR repeats span residues 215 to 248 (ALLYYLRGVILKQEKNISKAMSSFLKSLSCYSFN), 295 to 328 (MIKFFKLKVFEELNGQLEDYFEDLEFLLQVFPNF), 329 to 362 (TFLKAYNATISYNNLDYVTAESRFDDIVKQDPYR), 363 to 396 (LNDLETYSNILYVMQKNSKLAYLAQFVSQIDRFR), 397 to 430 (PETCCIIANYYSARQEHEKSIMYFRRALTLDKKT), 431 to 464 (TNAWTLMGHEFVELSNSHAAIECYRRAVDICPRD), 465 to 498 (FKAWFGLGQAYALLDMHLYSLYYFQKACTLKPWD), 499 to 532 (RRIWQVLGECYSKTGNKVEAIKCYKRSIKASQTV), and 536 to 569 (TSIYYRLAQLYEELEDLQECKKFMMKCVDVEELL).

It belongs to the APC8/CDC23 family. In terms of assembly, the APC/C is composed of at least 13 subunits that stay tightly associated throughout the cell cycle: APC1, APC2, APC4, APC5, APC9, APC11, CDC16, CDC23, CDC26, CDC27, DOC1, MND2 and SWM1. CDC23 interacts directly with SWM1 and binds the destruction box (D-box) of the substrate cyclin CLB2. In terms of processing, phosphorylated by CDC28, which is required for the early mitotic activity of the APC/C in its CDC20-bound form.

It is found in the nucleus. Its subcellular location is the chromosome. It localises to the centromere. The protein localises to the kinetochore. It functions in the pathway protein modification; protein ubiquitination. Component of the anaphase promoting complex/cyclosome (APC/C), a cell cycle-regulated E3 ubiquitin-protein ligase complex that controls progression through mitosis and the G1 phase of the cell cycle. The APC/C is thought to confer substrate specificity and, in the presence of ubiquitin-conjugating E2 enzymes, it catalyzes the formation of protein-ubiquitin conjugates that are subsequently degraded by the 26S proteasome. In early mitosis, the APC/C is activated by CDC20 and targets securin PDS1, the B-type cyclin CLB5, and other anaphase inhibitory proteins for proteolysis, thereby triggering the separation of sister chromatids at the metaphase-to-anaphase transition. In late mitosis and in G1, degradation of CLB5 allows activation of the APC/C by CDH1, which is needed to destroy CDC20 and the B-type cyclin CLB2 to allow exit from mitosis and creating the low CDK state necessary for cytokinesis and for reforming prereplicative complexes in G1 prior to another round of replication. This is Anaphase-promoting complex subunit CDC23 (CDC23) from Saccharomyces cerevisiae (strain ATCC 204508 / S288c) (Baker's yeast).